The following is a 231-amino-acid chain: MTTPNFELYGYFRSSCSGRLRIAFHLKSIPYTRHPVNLLKGEQHSDTYKSLNPTNTVPLLVVSNINNTVSPSSASFSIGQSLAALEYLEEALPTNARPLLPPISNPVARAHVRTICNIIACDVQPVTNLKIQKKVKALDGDPTVWSRDLATQGFGAVEKLLELSAGRFCVGDEITLADVCLVPAVWAAERVGMDLARFPITKRVFEEMLKEEAVQKAHWQKQEDTPEDLRA.

Positions 4-96 (PNFELYGYFR…YLEEALPTNA (93 aa)) constitute a GST N-terminal domain. Glutathione is bound by residues serine 14, glutamine 43, valine 57, 80-81 (QS), glutamine 124, and 128-130 (NLK). Positions 105-227 (NPVARAHVRT…HWQKQEDTPE (123 aa)) constitute a GST C-terminal domain.

Belongs to the GST superfamily. Zeta family. Homodimer.

The enzyme catalyses RX + glutathione = an S-substituted glutathione + a halide anion + H(+). Probable glutathione S-transferase. This is Probable glutathione S-transferase from Coccidioides immitis (strain RS) (Valley fever fungus).